The primary structure comprises 350 residues: Flap endonuclease 1 (350 aa).

Residues 1–102 form an N-domain region; the sequence is MGVTALRELI…REIERRQKLK (102 aa). Mg(2+) is bound by residues Asp31, Asp84, Glu156, Glu158, Asp177, Asp179, and Asp240. Residues 120–261 form an I-domain region; the sequence is EARKYAQMSA…TALRYVKSYG (142 aa). An interaction with PCNA region spans residues 339 to 347; it reads KQSTLDMFF.

Belongs to the XPG/RAD2 endonuclease family. FEN1 subfamily. As to quaternary structure, interacts with PCNA. PCNA stimulates the nuclease activity without altering cleavage specificity. Requires Mg(2+) as cofactor.

Its function is as follows. Structure-specific nuclease with 5'-flap endonuclease and 5'-3' exonuclease activities involved in DNA replication and repair. During DNA replication, cleaves the 5'-overhanging flap structure that is generated by displacement synthesis when DNA polymerase encounters the 5'-end of a downstream Okazaki fragment. Binds the unpaired 3'-DNA end and kinks the DNA to facilitate 5' cleavage specificity. Cleaves one nucleotide into the double-stranded DNA from the junction in flap DNA, leaving a nick for ligation. Also involved in the base excision repair (BER) pathway. Acts as a genome stabilization factor that prevents flaps from equilibrating into structures that lead to duplications and deletions. Also possesses 5'-3' exonuclease activity on nicked or gapped double-stranded DNA. This Ignicoccus hospitalis (strain KIN4/I / DSM 18386 / JCM 14125) protein is Flap endonuclease 1.